We begin with the raw amino-acid sequence, 1129 residues long: Regulator of nonsense transcripts 1 (1129 aa).

The interval 1–415 is sufficient for interaction with RENT2; sequence MSVEAYGPSS…LRSSVGAPVE (415 aa). A phosphoserine mark is found at Ser-10 and Ser-31. The tract at residues 39–70 is disordered; sequence TLPSQTQTPPGGPGGPGGGGAGGPGGAGAGAA. The span at 52–69 shows a compositional bias: gly residues; that stretch reads GGPGGGGAGGPGGAGAGA. Residues 115–272 enclose the Upf1 CH-rich domain; the sequence is TKDLPIHACS…NKLEELWKEN (158 aa). The Zn(2+) site is built by Cys-123, Cys-126, Cys-137, Ser-140, Cys-145, His-155, His-159, Cys-165, Cys-183, Cys-186, Cys-209, and Cys-213. Positions 123 to 155 are C3H; sequence CSYCGIHDPACVVYCNTSKKWFCNGRGNTSGSH. Residues 137–165 are CC/SHH/C; the sequence is CNTSKKWFCNGRGNTSGSHIVNHLVRAKC. The tract at residues 183–213 is C4; sequence CYNCGCRNVFLLGFIPAKADSVVVLLCRQPC. ATP is bound by residues Gln-486 and 506 to 510; that span reads GTGKT. Ser-565 is modified (phosphoserine). The ATP site is built by Gln-676, Tyr-713, and Glu-844. Residue Ser-956 is modified to Phosphoserine. Disordered stretches follow at residues 1009–1058 and 1073–1096; these read FGQA…VASQ and SQPS…YLGD. At Arg-1019 the chain carries Omega-N-methylarginine. The segment covering 1025–1034 has biased composition (basic residues); sequence KTGRGGRQKN. Residues 1041–1058 show a composition bias toward polar residues; it reads PSQTNLPNSQASQDVASQ. The segment covering 1073–1086 has biased composition (low complexity); that stretch reads SQPSQMSQPGLSQP. A phosphoserine mark is found at Ser-1089, Ser-1107, Ser-1110, and Ser-1127. Short sequence motifs ([ST]-Q motif) lie at residues 1089-1090 and 1107-1108; these read SQ. Residues 1110-1129 form a disordered region; it reads STYQGERAYQHGGVTGLSQY.

The protein belongs to the DNA2/NAM7 helicase family. In terms of assembly, found in a post-splicing messenger ribonucleoprotein (mRNP) complex. Associates with the exon junction complex (EJC). Associates with the SGM1C complex; is phosphorylated by the complex kinase component SGM1. Part of a complex composed of SMG1, DHX34 and UPF1; within the complex DHX34 acts as a scaffolding protein to facilitate SMG1 phosphorylation of UPF1. Interacts with UPF2. Interacts with UPF3A and UPF3B. Interacts with EST1A. Interacts with SLBP. Interacts (when hyperphosphorylated) with PNRC2. Interacts with AGO1 and AGO2. Interacts with GSPT2. Interacts with isoform 1 and isoform 5 of ADAR/ADAR1. Interacts with SMG7. Interacts with ZC3H12A; this interaction occurs in a mRNA translationally active- and termination-dependent manner and is essential for ZC3H12A-mediated degradation of target mRNAs. Interacts with CPSF6. Interacts with MOV10; the interaction is direct and RNA-dependent. Interacts with SHFL; the interaction increases in the presence of RNA. Interacts with UPF2 and DDX4; interactions are mediated by TDRD6. Interacts with DHX34 and PABPC1/PABP1; the interactions are RNA-independent. Interacts with RBM46. As to quaternary structure, (Microbial infection) Interacts with human T-cell leukemia virus 1/HTLV-1 protein Tax; this interaction inhibits the host nonsense-mediated mRNA decay (NMD). Post-translationally, phosphorylated by SMG1; required for formation of mRNA surveillance complexes. Ubiquitous.

It is found in the cytoplasm. Its subcellular location is the P-body. It localises to the nucleus. The protein resides in the perinuclear region. The enzyme catalyses ATP + H2O = ADP + phosphate + H(+). In terms of biological role, RNA-dependent helicase required for nonsense-mediated decay (NMD) of aberrant mRNAs containing premature stop codons and modulates the expression level of normal mRNAs. Is recruited to mRNAs upon translation termination and undergoes a cycle of phosphorylation and dephosphorylation; its phosphorylation appears to be a key step in NMD. Recruited by release factors to stalled ribosomes together with the SMG1C protein kinase complex to form the transient SURF (SMG1-UPF1-eRF1-eRF3) complex. In EJC-dependent NMD, the SURF complex associates with the exon junction complex (EJC) (located 50-55 or more nucleotides downstream from the termination codon) through UPF2 and allows the formation of an UPF1-UPF2-UPF3 surveillance complex which is believed to activate NMD. Phosphorylated UPF1 is recognized by EST1B/SMG5, SMG6 and SMG7 which are thought to provide a link to the mRNA degradation machinery involving exonucleolytic and endonucleolytic pathways, and to serve as adapters to protein phosphatase 2A (PP2A), thereby triggering UPF1 dephosphorylation and allowing the recycling of NMD factors. UPF1 can also activate NMD without UPF2 or UPF3, and in the absence of the NMD-enhancing downstream EJC indicative for alternative NMD pathways. Plays a role in replication-dependent histone mRNA degradation at the end of phase S; the function is independent of UPF2. For the recognition of premature termination codons (PTC) and initiation of NMD a competitive interaction between UPF1 and PABPC1 with the ribosome-bound release factors is proposed. The ATPase activity of UPF1 is required for disassembly of mRNPs undergoing NMD. Together with UPF2 and dependent on TDRD6, mediates the degradation of mRNA harboring long 3'UTR by inducing the NMD machinery. Also capable of unwinding double-stranded DNA and translocating on single-stranded DNA. This is Regulator of nonsense transcripts 1 from Homo sapiens (Human).